The sequence spans 256 residues: Glutamate racemase (256 aa).

Substrate contacts are provided by residues 11–12 (DS) and 43–44 (YG). Cysteine 74 acts as the Proton donor/acceptor in catalysis. 75-76 (NT) is a binding site for substrate. Cysteine 182 functions as the Proton donor/acceptor in the catalytic mechanism. A substrate-binding site is contributed by 183–184 (TH).

Belongs to the aspartate/glutamate racemases family.

The catalysed reaction is L-glutamate = D-glutamate. It participates in cell wall biogenesis; peptidoglycan biosynthesis. Its function is as follows. Provides the (R)-glutamate required for cell wall biosynthesis. The polypeptide is Glutamate racemase (Leptospira interrogans serogroup Icterohaemorrhagiae serovar copenhageni (strain Fiocruz L1-130)).